Here is a 110-residue protein sequence, read N- to C-terminus: Coiled-coil-helix-coiled-coil-helix domain-containing protein 5 (110 aa).

Residue Met1 is modified to N-acetylmethionine. CHCH domains are found at residues 9–52 (ARYC…PIIR) and 55–97 (RQAC…QPPS). 4 consecutive short sequence motifs (cx9C motif) follow at residues 12–22 (CSRELDQYGQC), 34–44 (CHHLKMSIARC), 58–68 (CAEPFEAFEKC), and 79–89 (CAEHMRRFLQC). 4 disulfide bridges follow: Cys12-Cys44, Cys22-Cys34, Cys58-Cys89, and Cys68-Cys79.

As to quaternary structure, monomer.

Its subcellular location is the mitochondrion intermembrane space. The chain is Coiled-coil-helix-coiled-coil-helix domain-containing protein 5 (Chchd5) from Mus musculus (Mouse).